The following is a 1406-amino-acid chain: EF-hand calcium-binding domain-containing protein 5 (1406 aa).

The interval 255 to 655 (NKDLPQQQRD…KACEPKPQHV (401 aa)) is disordered. Composition is skewed to polar residues over residues 258 to 294 (LPQQQRDQELSSDSTTEPETATQLTSQQRSRRVSLTG), 322 to 334 (RRSSGVNQTQQRG), 342 to 354 (RRSSAVEQTQQRG), 362 to 373 (RRSSTVEQTRQR), 382 to 393 (RRSSTVEQTQRR), 402 to 414 (RRSSGVNQTQQRG), 422 to 434 (RRSSAVEQTQQRG), and 442 to 464 (RRSSAMEQEPQTAQDPNSDSLPE). The span at 465–477 (QESHRGSITEGSH) shows a compositional bias: basic and acidic residues. Over residues 501 to 513 (DDSGSAGSRRGSG) the composition is skewed to low complexity. The segment covering 564–577 (QELDEDSTPQLEDD) has biased composition (acidic residues). Basic and acidic residues-rich tracts occupy residues 578–598 (SALKESKTSELTKIETQEEKP) and 638–655 (SKRDSQKDKACEPKPQHV). The region spanning 773–808 (RRRILLQAIFEKWDNDGSGFLDLNEVDDLLYTYKEG) is the EF-hand domain. Aspartate 786, aspartate 788, serine 790, and glutamate 797 together coordinate Ca(2+).

In Mus musculus (Mouse), this protein is EF-hand calcium-binding domain-containing protein 5 (Efcab5).